We begin with the raw amino-acid sequence, 162 residues long: ATP synthase subunit delta, mitochondrial (162 aa).

Residues 1–24 constitute a mitochondrion transit peptide; sequence MFSVARTAIRGAARPAVRIARRGY.

F-type ATP synthases have 2 components, the catalytic core F(1) and the membrane-embedded component F(0), linked together by a central stalk and a peripheral stalk. The central stalk, also called rotor shaft, is often seen as part of F(1). The peripheral stalk is seen as part of F(0). F(0) contains the membrane channel next to the rotor. F-type ATP synthases form dimers but each monomer functions independently in ATP generation. The dimer consists of 17 different polypeptides: ATP1 (subunit alpha, 3 molecules per monomer, part of F(1)), ATP2 (subunit beta, 3 copies per monomer, part of F(1)), ATP3 (subunit gamma, part of the central stalk), ATP4 (subunit b, part of the peripheral stalk), ATP5/OSCP (subunit 5/OSCP, part of the peripheral stalk), ATP6 (subunit a, part of the peripheral stalk), ATP7 (subunit d, part of the peripheral stalk), ATP8 (subunit 8, part of the peripheral stalk), OLI1 (subunit c, part of the rotor, 10 molecules per monomer), ATP14 (subunit h, part of the peripheral stalk), ATP15 (subunit epsilon, part of the central stalk), ATP16 (subunit delta, part of the central stalk), ATP17 (subunit f, part of the peripheral stalk), ATP18 (subunit i/j, part of the peripheral stalk), ATP19 (subunit k, dimer-specific, at interface between monomers), ATP20 (subunit g, at interface between monomers), TIM11 (subunit e, at interface between monomers).

It is found in the mitochondrion inner membrane. Functionally, mitochondrial membrane ATP synthase (F(1)F(0) ATP synthase or Complex V) produces ATP from ADP in the presence of a proton gradient across the membrane which is generated by electron transport complexes of the respiratory chain. F-type ATP synthases consist of two structural domains, F(1) - containing the extramembraneous catalytic core, and F(0) - containing the membrane proton channel, linked together by a central stalk and a peripheral stalk. During catalysis, ATP synthesis in the catalytic domain of F(1) is coupled via a rotary mechanism of the central stalk subunits to proton translocation. Part of the complex F(1) domain and the central stalk which is part of the complex rotary element. Rotation of the central stalk against the surrounding alpha/ATP1(3)beta/ATP2(3) subunits leads to hydrolysis of ATP in three separate catalytic sites on the beta/ATP2 subunits. This is ATP synthase subunit delta, mitochondrial from Yarrowia lipolytica (strain CLIB 122 / E 150) (Yeast).